A 55-amino-acid polypeptide reads, in one-letter code: Large ribosomal subunit protein bL33 (55 aa).

Belongs to the bacterial ribosomal protein bL33 family.

In Acidiphilium cryptum (strain JF-5), this protein is Large ribosomal subunit protein bL33.